Reading from the N-terminus, the 262-residue chain is High-affinity zinc uptake system membrane protein ZnuB (262 aa).

7 helical membrane passes run 8 to 28 (GWLAGVLLSLTTGPLGSFIVW), 54 to 74 (INSFYAILILMSFIAIILAWL), 84 to 104 (TVLNIISHSSLSLGMVFISLI), 129 to 149 (ITISISSILILSILLFRWHSI), 179 to 199 (FTIAIAIKFVGALLITSLLII), 215 to 235 (VIIAIIVSILSVTGGISLSVF), and 238 to 254 (TPASPSIVLCSSFLCLI).

It belongs to the ABC-3 integral membrane protein family.

It is found in the cell membrane. In terms of biological role, involved in the high-affinity zinc uptake transport system. The chain is High-affinity zinc uptake system membrane protein ZnuB (znuB) from Buchnera aphidicola subsp. Acyrthosiphon pisum (strain APS) (Acyrthosiphon pisum symbiotic bacterium).